A 353-amino-acid chain; its full sequence is Polyadenylate-binding protein-interacting protein 10 (353 aa).

A disordered region spans residues 1 to 61 (MAVAENAGVK…IDSTPETDDR (61 aa)). A compositionally biased stretch (low complexity) spans 20-31 (NNNTAASATETT). Positions 96–106 (KLNPMAQEFVP) match the PAM2-like motif. Positions 128-159 (AAPPKLADGNDHFPRRRRSFGQGKRRMNKRTS) are disordered. A compositionally biased stretch (basic residues) spans 141-156 (PRRRRSFGQGKRRMNK). The Bipartite nuclear localization signal motif lies at 142–153 (RRRRSFGQGKRR). RRM domains lie at 169-244 (RTVY…PSKT) and 266-341 (RTVY…PSKT).

Expressed in cauline leaves, stems, rosette leaves, immature siliques and primary inflorescences.

It is found in the nucleus. In Arabidopsis thaliana (Mouse-ear cress), this protein is Polyadenylate-binding protein-interacting protein 10 (CID10).